The primary structure comprises 407 residues: Deacetylase Atu3266 (407 aa).

Zn(2+) contacts are provided by histidine 75, histidine 77, lysine 173, histidine 206, histidine 229, and aspartate 289. An N6-carboxylysine modification is found at lysine 173.

This sequence belongs to the metallo-dependent hydrolases superfamily. Atu3266/EF_0837 deacetylase family. Homohexamer, dimer of trimers. It depends on Zn(2+) as a cofactor.

In terms of biological role, esterase that catalyzes the deacetylation of acetyl-(R)-mandelate (in vitro). Can also hydrolyze acetyl glycolate, but with lower efficiency. Has very low N-acetyl-D-amino acid deacetylase activity with N-acetyl-D-serine and N-acetyl-D-threonine (in vitro). Theoretical substrate docking studies suggest that other N-acetylated amino acids may optimally occupy the active site and may in fact be the physiological substrates. The protein is Deacetylase Atu3266 of Agrobacterium fabrum (strain C58 / ATCC 33970) (Agrobacterium tumefaciens (strain C58)).